The primary structure comprises 304 residues: N-acetyllactosaminide alpha-2,3-sialyltransferase (304 aa).

CMP-N-acetyl-beta-neuraminate contacts are provided by residues 221–225, 242–243, and 262–263; these read FPHPA, FE, and SS. Residue histidine 223 is the Proton donor of the active site.

Belongs to the glycosyltransferase 52 family.

It catalyses the reaction a beta-D-galactosyl-(1-&gt;4)-N-acetyl-beta-D-glucosaminyl derivative + CMP-N-acetyl-beta-neuraminate = an N-acetyl-alpha-neuraminyl-(2-&gt;3)-beta-D-galactosyl-(1-&gt;4)-N-acetyl-beta-D-glucosaminyl derivative + CMP + H(+). Its pathway is bacterial outer membrane biogenesis; lipooligosaccharide biosynthesis. Functionally, catalyzes the transfer of sialic acid from the substrate CMP-N-acetylneuraminate to the terminal galactose residue of the N-acetyllactosamine moiety of surface lipooligosaccharide (LOS). Thus, functions in the sialylation of LOS, which plays a role in the evasion of the host immune response. This is N-acetyllactosaminide alpha-2,3-sialyltransferase from Haemophilus influenzae (strain ATCC 51907 / DSM 11121 / KW20 / Rd).